The following is a 263-amino-acid chain: Tryptophan synthase alpha chain (263 aa).

Active-site proton acceptor residues include glutamate 49 and aspartate 60.

Belongs to the TrpA family. In terms of assembly, tetramer of two alpha and two beta chains.

It catalyses the reaction (1S,2R)-1-C-(indol-3-yl)glycerol 3-phosphate + L-serine = D-glyceraldehyde 3-phosphate + L-tryptophan + H2O. Its pathway is amino-acid biosynthesis; L-tryptophan biosynthesis; L-tryptophan from chorismate: step 5/5. Functionally, the alpha subunit is responsible for the aldol cleavage of indoleglycerol phosphate to indole and glyceraldehyde 3-phosphate. The polypeptide is Tryptophan synthase alpha chain (Clostridium kluyveri (strain NBRC 12016)).